A 400-amino-acid polypeptide reads, in one-letter code: Imidazolonepropionase (400 aa).

Fe(3+)-binding residues include His-70 and His-72. 2 residues coordinate Zn(2+): His-70 and His-72. 3 residues coordinate 4-imidazolone-5-propanoate: Arg-79, Tyr-142, and His-175. Tyr-142 is a binding site for N-formimidoyl-L-glutamate. His-239 lines the Fe(3+) pocket. His-239 is a Zn(2+) binding site. A 4-imidazolone-5-propanoate-binding site is contributed by Gln-242. Residue Asp-314 participates in Fe(3+) binding. Asp-314 contributes to the Zn(2+) binding site. Asn-316 and Gly-318 together coordinate N-formimidoyl-L-glutamate. Thr-319 serves as a coordination point for 4-imidazolone-5-propanoate.

Belongs to the metallo-dependent hydrolases superfamily. HutI family. Zn(2+) serves as cofactor. The cofactor is Fe(3+).

The protein localises to the cytoplasm. It catalyses the reaction 4-imidazolone-5-propanoate + H2O = N-formimidoyl-L-glutamate. It functions in the pathway amino-acid degradation; L-histidine degradation into L-glutamate; N-formimidoyl-L-glutamate from L-histidine: step 3/3. In terms of biological role, catalyzes the hydrolytic cleavage of the carbon-nitrogen bond in imidazolone-5-propanoate to yield N-formimidoyl-L-glutamate. It is the third step in the universal histidine degradation pathway. The sequence is that of Imidazolonepropionase from Methylobacterium nodulans (strain LMG 21967 / CNCM I-2342 / ORS 2060).